The sequence spans 60 residues: UPF0434 protein YPA_0693 (60 aa).

This sequence belongs to the UPF0434 family.

In Yersinia pestis bv. Antiqua (strain Antiqua), this protein is UPF0434 protein YPA_0693.